The following is a 338-amino-acid chain: MAKMSTTHEEIALAGPDGIPAVDLRDLIDAQLYMPFPFERNPHASEAAAGVDHWLSTWGLTDDPAVAAMISCTRPAELAAFNGPDMDSGLLQIAANQIAYQFVFDDRAEDIGRHSPGRLLPMLSESVAILRDGQPPTTPLGAALADLHRQVQERCTPAQAARWAWNSREYVHGLLYEAVAQAHPAPVESGLCRSIRSLIAGVEPFYPLCEAAQRCELAPEELHHPAMRRLSRLSADAAVWIPDLFSAVKEQRAGGMINLALAYRRTHRCSLPAAVTLAVRHINSTIREFEDLYGEVRPELSPSGIGYVEGMAGWIRGCYFWSRTVPRYADTLTAPAGL.

2 residues coordinate Mg(2+): D105 and E109. The DDXXE motif motif lies at 105–109; that stretch reads DDRAE. R196 contributes to the substrate binding site. S246 is a binding site for Mg(2+). K249 lines the substrate pocket. E250 contributes to the Mg(2+) binding site. 327–328 lines the substrate pocket; it reads RY.

Belongs to the terpene synthase family. Mg(2+) serves as cofactor.

It carries out the reaction (2E,6E)-farnesyl diphosphate = (-)-alpha-amorphene + diphosphate. The protein operates within secondary metabolite biosynthesis; terpenoid biosynthesis. Catalyzes the conversion of (2E,6E)-farnesyl diphosphate (FPP) to yield the bicyclic sesquiterpene (1R,6S,7S)-(-)-alpha-amorphene via a probable 1,6-cyclization, which could involve the abstraction of the pyrophosphate from FPP to yield a (R)-bisabolyl cation. The only accepted substrate is (2E,6E)-farnesyl diphosphate (FPP). The polypeptide is (-)-alpha-amorphene synthase ((2E,6E)-farnesyl diphosphate cyclizing) (Streptomyces viridochromogenes (strain DSM 40736 / JCM 4977 / BCRC 1201 / Tue 494)).